We begin with the raw amino-acid sequence, 115 residues long: NADH-ubiquinone oxidoreductase chain 3 (115 aa).

The next 3 helical transmembrane spans lie at 3–23, 55–75, and 84–104; these read FALILMINTLLALLLMIITFW, FFLVAITFLLFDLEIALLLPL, and LPLMVMSSLLLIIILALSLAY.

Belongs to the complex I subunit 3 family. As to quaternary structure, core subunit of respiratory chain NADH dehydrogenase (Complex I) which is composed of 45 different subunits. Interacts with TMEM186. Interacts with TMEM242.

It is found in the mitochondrion inner membrane. It catalyses the reaction a ubiquinone + NADH + 5 H(+)(in) = a ubiquinol + NAD(+) + 4 H(+)(out). Core subunit of the mitochondrial membrane respiratory chain NADH dehydrogenase (Complex I) which catalyzes electron transfer from NADH through the respiratory chain, using ubiquinone as an electron acceptor. Essential for the catalytic activity of complex I. The chain is NADH-ubiquinone oxidoreductase chain 3 from Homo sapiens (Human).